A 549-amino-acid chain; its full sequence is Arginine--tRNA ligase (549 aa).

A 'HIGH' region motif is present at residues 113–123; the sequence is ANPDGPLHIGH.

Belongs to the class-I aminoacyl-tRNA synthetase family.

The protein resides in the cytoplasm. It carries out the reaction tRNA(Arg) + L-arginine + ATP = L-arginyl-tRNA(Arg) + AMP + diphosphate. This Archaeoglobus fulgidus (strain ATCC 49558 / DSM 4304 / JCM 9628 / NBRC 100126 / VC-16) protein is Arginine--tRNA ligase (argS).